Reading from the N-terminus, the 1073-residue chain is Guanylyl cyclase C (1073 aa).

Positions 1–23 (MKTPLLALALWSLLLQLGLTFWP) are cleaved as a signal peptide. Over 24–433 (SSVSQNCHNG…IPGRGPQILM (410 aa)) the chain is Extracellular. 7 N-linked (GlcNAc...) asparagine glycosylation sites follow: N32, N43, N79, N195, N284, N307, and N402. Residues 434–454 (IAVFTLTGTIVLLLLIALLVL) traverse the membrane as a helical segment. At 455–1073 (RKYKREYALR…NTTDNESTHF (619 aa)) the chain is on the cytoplasmic side. The region spanning 489–749 (LKIDDDRRRD…KIENTLAKIF (261 aa)) is the Protein kinase domain. The Guanylate cyclase domain maps to 824–954 (TIYFSDIVGF…DTVNTASRME (131 aa)).

This sequence belongs to the adenylyl cyclase class-4/guanylyl cyclase family. Homotrimer. Interacts via its C-terminal region with NHERF4. Interacts with the lectin chaperone VIP36. Glycosylation at Asn-79 is required for interaction with VIP36 while glycosylation at Asn-402 modulates ligand-mediated GC-C activation.

The protein localises to the cell membrane. It is found in the endoplasmic reticulum membrane. It carries out the reaction GTP = 3',5'-cyclic GMP + diphosphate. Its function is as follows. Guanylyl cyclase that catalyzes synthesis of cyclic GMP (cGMP) from GTP. This chain is Guanylyl cyclase C (GUCY2C), found in Sus scrofa (Pig).